The chain runs to 729 residues: Fatty acid oxidation complex subunit alpha (729 aa).

Residues 1–189 (MLYKGDTLYL…KIGLVDGVVK (189 aa)) form an enoyl-CoA hydratase/isomerase region. D296 lines the substrate pocket. Residues 311–729 (ETPKQAAVLG…ARPVGDLKTA (419 aa)) form a 3-hydroxyacyl-CoA dehydrogenase region. Residues M324, D343, 400–402 (VVE), K407, and S429 contribute to the NAD(+) site. Catalysis depends on H450, which acts as the For 3-hydroxyacyl-CoA dehydrogenase activity. N453 is an NAD(+) binding site. The substrate site is built by N500 and Y660. The tract at residues 708 to 729 (RHNEPYYPPVEPARPVGDLKTA) is disordered.

This sequence in the N-terminal section; belongs to the enoyl-CoA hydratase/isomerase family. It in the C-terminal section; belongs to the 3-hydroxyacyl-CoA dehydrogenase family. As to quaternary structure, heterotetramer of two alpha chains (FadB) and two beta chains (FadA).

The enzyme catalyses a (3S)-3-hydroxyacyl-CoA + NAD(+) = a 3-oxoacyl-CoA + NADH + H(+). It carries out the reaction a (3S)-3-hydroxyacyl-CoA = a (2E)-enoyl-CoA + H2O. It catalyses the reaction a 4-saturated-(3S)-3-hydroxyacyl-CoA = a (3E)-enoyl-CoA + H2O. The catalysed reaction is (3S)-3-hydroxybutanoyl-CoA = (3R)-3-hydroxybutanoyl-CoA. The enzyme catalyses a (3Z)-enoyl-CoA = a 4-saturated (2E)-enoyl-CoA. It carries out the reaction a (3E)-enoyl-CoA = a 4-saturated (2E)-enoyl-CoA. Its pathway is lipid metabolism; fatty acid beta-oxidation. Involved in the aerobic and anaerobic degradation of long-chain fatty acids via beta-oxidation cycle. Catalyzes the formation of 3-oxoacyl-CoA from enoyl-CoA via L-3-hydroxyacyl-CoA. It can also use D-3-hydroxyacyl-CoA and cis-3-enoyl-CoA as substrate. The polypeptide is Fatty acid oxidation complex subunit alpha (Escherichia coli (strain SMS-3-5 / SECEC)).